A 118-amino-acid chain; its full sequence is Small ribosomal subunit protein uS13 (118 aa).

The disordered stretch occupies residues 94-118 (SLPLRGQRTKTNARTRKGPRKPIKR).

The protein belongs to the universal ribosomal protein uS13 family. In terms of assembly, part of the 30S ribosomal subunit. Forms a loose heterodimer with protein S19. Forms two bridges to the 50S subunit in the 70S ribosome.

In terms of biological role, located at the top of the head of the 30S subunit, it contacts several helices of the 16S rRNA. In the 70S ribosome it contacts the 23S rRNA (bridge B1a) and protein L5 of the 50S subunit (bridge B1b), connecting the 2 subunits; these bridges are implicated in subunit movement. Contacts the tRNAs in the A and P-sites. This is Small ribosomal subunit protein uS13 from Photobacterium profundum (strain SS9).